A 438-amino-acid chain; its full sequence is sn-glycerol-3-phosphate-binding periplasmic protein UgpB (438 aa).

A signal peptide spans 1–23 (MKPLHYTASALALGLALMGNAQA). The sn-glycerol 3-phosphate site is built by Y65, E89, S144, S270, G307, Y346, and R397.

This sequence belongs to the bacterial solute-binding protein 1 family. The complex is composed of two ATP-binding proteins (UgpC), two transmembrane proteins (UgpA and UgpE) and a solute-binding protein (UgpB).

It localises to the periplasm. In terms of biological role, part of the ABC transporter complex UgpBAEC involved in sn-glycerol-3-phosphate (G3P) import. Binds G3P. This chain is sn-glycerol-3-phosphate-binding periplasmic protein UgpB (ugpB), found in Escherichia coli O157:H7.